We begin with the raw amino-acid sequence, 202 residues long: Recombination protein RecR (202 aa).

The C4-type zinc finger occupies 56–71 (CVVCGTVSDKEHCRIC). The Toprim domain maps to 79 to 179 (TVICVVEEPK…TVSRLASGLP (101 aa)).

This sequence belongs to the RecR family.

May play a role in DNA repair. It seems to be involved in an RecBC-independent recombinational process of DNA repair. It may act with RecF and RecO. The polypeptide is Recombination protein RecR (Rhodococcus jostii (strain RHA1)).